Consider the following 266-residue polypeptide: Hydroxyethylthiazole kinase (266 aa).

Residue methionine 43 coordinates substrate. ATP-binding residues include arginine 119 and threonine 166. Substrate is bound at residue glycine 193.

It belongs to the Thz kinase family. It depends on Mg(2+) as a cofactor.

It catalyses the reaction 5-(2-hydroxyethyl)-4-methylthiazole + ATP = 4-methyl-5-(2-phosphooxyethyl)-thiazole + ADP + H(+). It functions in the pathway cofactor biosynthesis; thiamine diphosphate biosynthesis; 4-methyl-5-(2-phosphoethyl)-thiazole from 5-(2-hydroxyethyl)-4-methylthiazole: step 1/1. Catalyzes the phosphorylation of the hydroxyl group of 4-methyl-5-beta-hydroxyethylthiazole (THZ). This Methanococcus maripaludis (strain C7 / ATCC BAA-1331) protein is Hydroxyethylthiazole kinase.